Here is a 1009-residue protein sequence, read N- to C-terminus: MSGVSEPLSRVKLGTLRRPEGPAEPMVVVPVDVEKEDVRILKVCFYSNSFNPGKNFKLVKCTVQTEIREIITSILLSGRIGPNIRLAECYGLRLKHMKSDEIHWLHPQMTVGEVQDKYECLHVEAEWRYDLQIRYLPEDFMESLKEDRTTLLYFYQQLRNDYMQRYASKVSEGMALQLGCLELRRFFKDMPHNALDKKSNFELLEKEVGLDLFFPKQMQENLKPKQFRKMIQQTFQQYASLREEECVMKFFNTLAGFANIDQETYRCELIQGWNITVDLVIGPKGIRQLTSQDAKPTCLAEFKQIRSIRCLPLEEGQAVLQLGIEGAPQALSIKTSSLAEAENMADLIDGYCRLQGEHQGSLIIHPRKDGEKRNSLPQIPMLNLEARRSHLSESCSIESDIYAEIPDETLRRPGGPQYGIAREDVVLNRILGEGFFGEVYEGVYTNHKGEKINVAVKTCKKDCTLDNKEKFMSEAVIMKNLDHPHIVKLIGIIEEEPTWIIMELYPYGELGHYLERNKNSLKVLTLVLYSLQICKAMAYLESINCVHRDIAVRNILVASPECVKLGDFGLSRYIEDEDYYKASVTRLPIKWMSPESINFRRFTTASDVWMFAVCMWEILSFGKQPFFWLENKDVIGVLEKGDRLPKPDLCPPVLYTLMTRCWDYDPSDRPRFTELVCSLSDVYQMEKDIAMEQERNARYRTPKILEPTAFQEPPPKPSRPKYRPPPQTNLLAPKLQFQVPEGLCASSPTLTSPMEYPSPVNSLHTPPLHRHNVFKRHSMREEDFIQPSSREEAQQLWEAEKVKMRQILDKQQKQMVEDYQWLRQEEKSLDPMVYMNDKSPLTPEKEVGYLEFTGPPQKPPRLGAQSIQPTANLDRTDDLVYLNVMELVRAVLELKNELCQLPPEGYVVVVKNVGLTLRKLIGSVDDLLPSLPSSSRTEIEGTQKLLNKDLAELINKMRLAQQNAVTSLSEECKRQMLTASHTLAVDAKNLLDAVDQAKVLANLAHPPAE.

The FERM domain occupies 39 to 359 (RILKVCFYSN…GYCRLQGEHQ (321 aa)). Phosphoserine occurs at positions 361, 375, and 399. At Tyr-402 the chain carries Phosphotyrosine; by autocatalysis. Residues 425-683 (VVLNRILGEG…ELVCSLSDVY (259 aa)) enclose the Protein kinase domain. ATP-binding positions include 431 to 439 (LGEGFFGEV), Lys-457, and 503 to 509 (ELYPYGE). Asp-549 (proton acceptor) is an active-site residue. At Tyr-579 the chain carries Phosphotyrosine. Phosphotyrosine; by SRC, FYN and LCK is present on Tyr-580. Residues 701 to 725 (TPKILEPTAFQEPPPKPSRPKYRPP) form a disordered region. The segment covering 712–725 (EPPPKPSRPKYRPP) has biased composition (pro residues). A Phosphotyrosine modification is found at Tyr-722. Ser-762 is subject to Phosphoserine. Thr-765 is modified (phosphothreonine). The interval 801–1009 (KVKMRQILDK…LANLAHPPAE (209 aa)) is interaction with TGFB1I1. 2 positions are modified to phosphotyrosine: Tyr-819 and Tyr-834. Ser-839 is modified (phosphoserine). Thr-842 is subject to Phosphothreonine. At Tyr-849 the chain carries Phosphotyrosine. Ser-866 bears the Phosphoserine mark. The interval 868–1009 (QPTANLDRTD…LANLAHPPAE (142 aa)) is focal adhesion targeting (FAT). Tyr-881 carries the post-translational modification Phosphotyrosine; by SRC.

It belongs to the protein kinase superfamily. Tyr protein kinase family. FAK subfamily. Homodimer, or homooligomer. Interacts with SIRPA and SH2D3C. Interacts with ARHGAP10. Interacts with DLG4. Interacts with KCNA2. Interacts with NPHP1, ASAP1, ASAP2, ARHGAP26, SKAP2 and TGFB1I1. The Tyr-402 phosphorylated form interacts with SRC (via SH2 domain) and SRC family members. Forms a signaling complex with EPHA1, LCK and phosphatidylinositol 3-kinase; upon activation by EFNA1. Interacts with GRB2 (via SH2 domain). Interacts with P53/TP53 and MDM2. Interacts with MYLK. Interacts with BCAR1. Interacts with PDPK1. Interacts (hypophosphorylated) with PXN. Interacts with RB1CC1. Interacts with RHOU. Interacts with VAV1. Interacts with LPXN and PTPN12. In terms of processing, phosphorylated on tyrosine residues in response to various stimuli that elevate the intracellular calcium concentration; this activation is indirect and may be mediated by production of reactive oxygen species (ROS). Tyr-402 is the major autophosphorylation site, but other kinases can also phosphorylate Tyr-402. Autophosphorylation occurs in trans, i.e. one subunit of the dimeric receptor phosphorylates tyrosine residues on the other subunit. Phosphorylation at Tyr-402 promotes interaction with SRC and SRC family members, leading to phosphorylation at Tyr-579; Tyr-580 and Tyr-881. Phosphorylation at Tyr-881 is important for interaction with GRB2. Phosphorylated on tyrosine residues upon activation of FGR and PKC. Recruitment by NPHP1 to cell matrix adhesions initiates Tyr-402 phosphorylation. In monocytes, adherence to substrata is required for tyrosine phosphorylation and kinase activation. Angiotensin II, thapsigargin and L-alpha-lysophosphatidic acid (LPA) also induce autophosphorylation and increase kinase activity. Phosphorylation by MYLK promotes ITGB2 activation and is thus essential to trigger neutrophil transmigration during lung injury. Dephosphorylated by PTPN12. Most abundant in the brain, with highest levels in amygdala and hippocampus. Low levels in kidney (at protein level). Also expressed in spleen and lymphocytes.

The protein localises to the cytoplasm. The protein resides in the perinuclear region. It is found in the cell membrane. It localises to the cell junction. Its subcellular location is the focal adhesion. The protein localises to the cell projection. The protein resides in the lamellipodium. It is found in the cell cortex. It localises to the nucleus. The catalysed reaction is L-tyrosyl-[protein] + ATP = O-phospho-L-tyrosyl-[protein] + ADP + H(+). With respect to regulation, activated in response to stimuli that lead to increased intracellular Ca(2+) levels; this activation is indirect and may be mediated by calcium-mediated production of reactive oxygen species (ROS). Activated by autophosphorylation at Tyr-402; this creates a binding site for SRC family kinases and leads to phosphorylation at additional tyrosine residues. Phosphorylation at Tyr-402, Tyr-579 and Tyr-580 is required for optimal kinase activity. Inhibited by PF-562,271, BIRB796, PF-4618433 and by PF-431396, PF-2318841 and their derivatives. Inhibited by sulfoximine-substituted trifluoromethylpyrimidines. Inhibited by 4-amino and 5-aryl substituted pyridinone compounds. Its function is as follows. Non-receptor protein-tyrosine kinase that regulates reorganization of the actin cytoskeleton, cell polarization, cell migration, adhesion, spreading and bone remodeling. Plays a role in the regulation of the humoral immune response, and is required for normal levels of marginal B-cells in the spleen and normal migration of splenic B-cells. Required for normal macrophage polarization and migration towards sites of inflammation. Regulates cytoskeleton rearrangement and cell spreading in T-cells, and contributes to the regulation of T-cell responses. Promotes osteoclastic bone resorption; this requires both PTK2B/PYK2 and SRC. May inhibit differentiation and activity of osteoprogenitor cells. Functions in signaling downstream of integrin and collagen receptors, immune receptors, G-protein coupled receptors (GPCR), cytokine, chemokine and growth factor receptors, and mediates responses to cellular stress. Forms multisubunit signaling complexes with SRC and SRC family members upon activation; this leads to the phosphorylation of additional tyrosine residues, creating binding sites for scaffold proteins, effectors and substrates. Regulates numerous signaling pathways. Promotes activation of phosphatidylinositol 3-kinase and of the AKT1 signaling cascade. Promotes activation of NOS3. Regulates production of the cellular messenger cGMP. Promotes activation of the MAP kinase signaling cascade, including activation of MAPK1/ERK2, MAPK3/ERK1 and MAPK8/JNK1. Promotes activation of Rho family GTPases, such as RHOA and RAC1. Recruits the ubiquitin ligase MDM2 to P53/TP53 in the nucleus, and thereby regulates P53/TP53 activity, P53/TP53 ubiquitination and proteasomal degradation. Acts as a scaffold, binding to both PDPK1 and SRC, thereby allowing SRC to phosphorylate PDPK1 at 'Tyr-9, 'Tyr-373', and 'Tyr-376'. Promotes phosphorylation of NMDA receptors by SRC family members, and thereby contributes to the regulation of NMDA receptor ion channel activity and intracellular Ca(2+) levels. May also regulate potassium ion transport by phosphorylation of potassium channel subunits. Phosphorylates SRC; this increases SRC kinase activity. Phosphorylates ASAP1, NPHP1, KCNA2 and SHC1. Promotes phosphorylation of ASAP2, RHOU and PXN; this requires both SRC and PTK2/PYK2. The chain is Protein-tyrosine kinase 2-beta (PTK2B) from Homo sapiens (Human).